The following is a 193-amino-acid chain: NAD(P)H-quinone oxidoreductase subunit I (193 aa).

4Fe-4S ferredoxin-type domains follow at residues 56–85 and 96–125; these read GRIH…VDWE and KHYS…MTEE. C65, C68, C71, C75, C105, C108, C111, and C115 together coordinate [4Fe-4S] cluster. The segment at 174 to 193 is disordered; the sequence is NLPKGSQRAGQHPEDLVKAE. A compositionally biased stretch (basic and acidic residues) spans 184-193; sequence QHPEDLVKAE.

Belongs to the complex I 23 kDa subunit family. As to quaternary structure, NDH-1 is composed of at least 11 different subunits. Requires [4Fe-4S] cluster as cofactor.

It localises to the cellular thylakoid membrane. It catalyses the reaction a plastoquinone + NADH + (n+1) H(+)(in) = a plastoquinol + NAD(+) + n H(+)(out). The catalysed reaction is a plastoquinone + NADPH + (n+1) H(+)(in) = a plastoquinol + NADP(+) + n H(+)(out). NDH-1 shuttles electrons from an unknown electron donor, via FMN and iron-sulfur (Fe-S) centers, to quinones in the respiratory and/or the photosynthetic chain. The immediate electron acceptor for the enzyme in this species is believed to be plastoquinone. Couples the redox reaction to proton translocation, and thus conserves the redox energy in a proton gradient. The chain is NAD(P)H-quinone oxidoreductase subunit I from Synechocystis sp. (strain ATCC 27184 / PCC 6803 / Kazusa).